Consider the following 423-residue polypeptide: Alpha-1-antichymotrypsin (423 aa).

The N-terminal stretch at 1–23 is a signal peptide; it reads MERMLPLLALGLLAAGFCPAVLC. Asparagine 33, asparagine 93, asparagine 106, asparagine 127, and asparagine 186 each carry an N-linked (GlcNAc...) asparagine glycan. The DNA-binding element occupies 235 to 237; that stretch reads KKK. N-linked (GlcNAc...) asparagine glycosylation is present at asparagine 271. Positions 369–394 are RCL; the sequence is GTEASAATAVKITLLSALVETRTIVR. Positions 381-389 are O-glycosylated at one site; the sequence is TLLSALVET.

It belongs to the serpin family. In terms of assembly, interacts with DNAJC1. Post-translationally, N- and O-glycosylated. As to expression, plasma. Synthesized in the liver. Like the related alpha-1-antitrypsin, its concentration increases in the acute phase of inflammation or infection. Found in the amyloid plaques from the hippocampus of Alzheimer disease brains.

The protein resides in the secreted. In terms of biological role, although its physiological function is unclear, it can inhibit neutrophil cathepsin G and mast cell chymase, both of which can convert angiotensin-1 to the active angiotensin-2. The polypeptide is Alpha-1-antichymotrypsin (SERPINA3) (Homo sapiens (Human)).